The following is a 456-amino-acid chain: Signal transduction histidine-protein kinase ArlS (456 aa).

Helical transmembrane passes span 13–33 and 157–177; these read LITT…IIFF and IVAL…SYIF. Residues 179–232 enclose the HAMP domain; it reads SQITKPIVTMSNKMNQIRRDGFQNKLELTTNYEETDNLIDTFNEMMYQIEESFN. In terms of domain architecture, Histidine kinase spans 240-456; the sequence is DASHELRTPL…TFKISFPVLN (217 aa). H243 bears the Phosphohistidine; by autocatalysis mark.

In terms of processing, autophosphorylated.

The protein localises to the cell membrane. It catalyses the reaction ATP + protein L-histidine = ADP + protein N-phospho-L-histidine.. Member of the two-component regulatory system ArlS/ArlR. ArlS probably functions as a sensor protein kinase which is autophosphorylated at a histidine residue and transfers its phosphate group to ArlR. This Staphylococcus epidermidis (strain ATCC 12228 / FDA PCI 1200) protein is Signal transduction histidine-protein kinase ArlS (arlS).